We begin with the raw amino-acid sequence, 290 residues long: MDKIIKTISESGAFRAFVLDSTETVRTAQEKHQTQASSTVALGRTLIASQILAANEKGNTKLTVKVLGSSSLGAIITVADTKGNVKGYVQNPGVDIKKTATGEVLVGPFVGNGQFLVITDYGTGNPYNSITPLISGEIGEDLAFYLTESQQTPSAVGLNVLLDEEDKVKIAGGFLVQVLPGAKKEEIARFEKRIQEMPAISTLLESDDHIEALLKAIYGDEAYKRLSEEEIRFQCDCSHERFMNALASLPSSDLQEMKEEDHGAEITCQFCQTTYNFDEKDLEELIRDKS.

2 cysteine pairs are disulfide-bonded: Cys-235/Cys-237 and Cys-268/Cys-271.

It belongs to the HSP33 family. In terms of processing, under oxidizing conditions two disulfide bonds are formed involving the reactive cysteines. Under reducing conditions zinc is bound to the reactive cysteines and the protein is inactive.

The protein localises to the cytoplasm. Redox regulated molecular chaperone. Protects both thermally unfolding and oxidatively damaged proteins from irreversible aggregation. Plays an important role in the bacterial defense system toward oxidative stress. The polypeptide is 33 kDa chaperonin (Streptococcus pneumoniae (strain CGSP14)).